The primary structure comprises 104 residues: Small ribosomal subunit protein uS10 (104 aa).

This sequence belongs to the universal ribosomal protein uS10 family. As to quaternary structure, part of the 30S ribosomal subunit.

Functionally, involved in the binding of tRNA to the ribosomes. The polypeptide is Small ribosomal subunit protein uS10 (Albidiferax ferrireducens (strain ATCC BAA-621 / DSM 15236 / T118) (Rhodoferax ferrireducens)).